A 118-amino-acid chain; its full sequence is Non-specific lipid-transfer protein 1 (118 aa).

Positions 1–25 (MAGVMKLACLLLACMIVAGPITSNA) are cleaved as a signal peptide. Intrachain disulfides connect Cys29/Cys76, Cys39/Cys53, Cys54/Cys100, and Cys74/Cys114.

The protein belongs to the plant LTP family. Expressed primarily in epidermal cells.

The protein resides in the secreted. It is found in the cell wall. Functionally, plant non-specific lipid-transfer proteins transfer phospholipids as well as galactolipids across membranes. May play a role in wax or cutin deposition in the cell walls of expanding epidermal cells and certain secretory tissues. The polypeptide is Non-specific lipid-transfer protein 1 (LTP1) (Arabidopsis thaliana (Mouse-ear cress)).